Reading from the N-terminus, the 123-residue chain is Small ribosomal subunit protein uS12 (123 aa).

Residues methionine 1–methionine 24 form a disordered region. Over residues arginine 9–serine 19 the composition is skewed to basic residues. 3-methylthioaspartic acid is present on aspartate 89.

This sequence belongs to the universal ribosomal protein uS12 family. As to quaternary structure, part of the 30S ribosomal subunit. Contacts proteins S8 and S17. May interact with IF1 in the 30S initiation complex.

Its function is as follows. With S4 and S5 plays an important role in translational accuracy. In terms of biological role, interacts with and stabilizes bases of the 16S rRNA that are involved in tRNA selection in the A site and with the mRNA backbone. Located at the interface of the 30S and 50S subunits, it traverses the body of the 30S subunit contacting proteins on the other side and probably holding the rRNA structure together. The combined cluster of proteins S8, S12 and S17 appears to hold together the shoulder and platform of the 30S subunit. This Sphingopyxis alaskensis (strain DSM 13593 / LMG 18877 / RB2256) (Sphingomonas alaskensis) protein is Small ribosomal subunit protein uS12.